We begin with the raw amino-acid sequence, 110 residues long: Class I hydrophobin 2 (110 aa).

The first 17 residues, 1–17, serve as a signal peptide directing secretion; sequence MQFKFLTTVALATLAVA. 4 disulfides stabilise this stretch: C28-C89, C36-C83, C37-C71, and C90-C103. Residue N57 is glycosylated (N-linked (GlcNAc...) asparagine).

The protein belongs to the fungal hydrophobin family. As to quaternary structure, self-assembles to form functional amyloid fibrils called rodlets. Self-assembly into fibrillar rodlets occurs spontaneously at hydrophobic:hydrophilic interfaces and the rodlets further associate laterally to form amphipathic monolayers.

It localises to the secreted. The protein localises to the cell wall. Its function is as follows. Aerial growth, conidiation, and dispersal of filamentous fungi in the environment rely upon a capability of their secreting small amphipathic proteins called hydrophobins (HPBs) with low sequence identity. Class I can self-assemble into an outermost layer of rodlet bundles on aerial cell surfaces, conferring cellular hydrophobicity that supports fungal growth, development and dispersal; whereas Class II form highly ordered films at water-air interfaces through intermolecular interactions but contribute nothing to the rodlet structure. CoH2 is an asexual monokaryon-specific class I hydrophobin that is involved in aerial growth of mycelia. The sequence is that of Class I hydrophobin 2 from Coprinopsis cinerea (Inky cap fungus).